The following is a 247-amino-acid chain: PsbP domain-containing protein 3, chloroplastic (247 aa).

Residues 1–26 (MAAISPWLSSPQSFSNPRVTITDSRR) constitute a chloroplast transit peptide. Residues 27 to 80 (CSSISAAISVLDSSNEEQHRISSRDHVGMKRRDVMLQIASSVFFLPLAISPAFA) constitute a thylakoid transit peptide.

It belongs to the PsbP family.

The protein localises to the plastid. It is found in the chloroplast thylakoid lumen. This Arabidopsis thaliana (Mouse-ear cress) protein is PsbP domain-containing protein 3, chloroplastic (PPD3).